Here is a 440-residue protein sequence, read N- to C-terminus: Xaa-Pro dipeptidase (440 aa).

Mn(2+) contacts are provided by D244, D255, H336, E381, and E420.

It belongs to the peptidase M24B family. Mn(2+) serves as cofactor. In terms of processing, the N-terminus is blocked.

The catalysed reaction is Xaa-L-Pro dipeptide + H2O = an L-alpha-amino acid + L-proline. It carries out the reaction diisopropyl fluorophosphate + H2O = diisopropyl phosphate + fluoride + 2 H(+). Functionally, splits dipeptides with a prolyl or hydroxyprolyl residue in the C-terminal position and a nonpolar amino acid at the N-terminal position. Also catalyzes the hydrolysis of toxic organophosphorus cholinesterase-inhibiting compounds including nerve gases such as diisopropylfluorophosphate (DFP), O-isopropyl methylphosphonofluoridate (sarin), O-pinacolyl methylphosphonofluoridate (soman), and O-cyclohexyl methylphosphonofluoridate. This Pseudoalteromonas haloplanktis (Alteromonas haloplanktis) protein is Xaa-Pro dipeptidase (pepQ).